The chain runs to 175 residues: Universal stress protein A-like protein (175 aa).

Ala11, Val12, Asn13, Ser26, Cys27, Val53, Gly131, Arg133, Thr145, Val146, and Ser147 together coordinate AMP.

It belongs to the universal stress protein A family. Homohexamer.

In Arabidopsis thaliana (Mouse-ear cress), this protein is Universal stress protein A-like protein.